The sequence spans 622 residues: MASPLPSGFPARRNSRLDVFLRRHLPPEVYDAVRAYEPCIVVSNSENHILKYVVLSDRLVYLTENPPKSIRRVVALRDVVAIDLIDDYPEFLSSPDREISQHIRIIYSSTVLKKECKKSNSVRKFLFPFHHTKANNKKVKEEKNGLAFWRSKESRSLKESPLRDQQESSTPSKDSTLCPRPGLKKLSLHGQGAFRPLPSPSRRSSQSAPTTGKAVSEPSCTTNTKEPQGLPDHNSISEIPFKCNGNGNEFYLGNSLLDSPSQSNSNLEKKESELHLYVISTTSSIFLHLKSSWNNYIIKATLLQDPFYASEFSPAIGSQKPYRSEEKIKHFSQLKSELFLKDNSLRRILSLLMELKVAAQKNFILKRLFWKTSDLFYFIVNKLHEYLPESRDKNALQNQSQRVDELVACIEIIQTLVLMFRETETESSRLNTLAAKKGALFNLLVILISEPQIPKSCPVFDIQLVADSALVRMSFDAELQKLILEYTNTATALLYEILLVFQQGNLGLGSTKFAISWIMSFLQSCPPIITFVASIVKQVVRGLSASFQLLSPCQAVLLYQQFYILKSCLRHSRTLAEYIRNNYREEFRYFIHMPALQKRLPLCYPITQPTIQLFHEVLKLVE.

Positions 157 to 166 (LKESPLRDQQ) are enriched in basic and acidic residues. Positions 157-238 (LKESPLRDQQ…GLPDHNSISE (82 aa)) are disordered.

This is an uncharacterized protein from Homo sapiens (Human).